Here is a 370-residue protein sequence, read N- to C-terminus: 5-hydroxytryptamine receptor 5B (370 aa).

The segment at 1–36 is disordered; sequence MEVSNLSGATPGIAFPPGPESCSDSPSSGRSMGSTP. Over 1 to 48 the chain is Extracellular; the sequence is MEVSNLSGATPGIAFPPGPESCSDSPSSGRSMGSTPGGLILSGREPPF. N-linked (GlcNAc...) asparagine glycosylation is present at asparagine 5. The span at 20-36 shows a compositional bias: low complexity; that stretch reads ESCSDSPSSGRSMGSTP. The helical transmembrane segment at 49-75 threads the bilayer; that stretch reads SAFTVLVVTLLVLLIAATFLWNLLVLV. At 76–88 the chain is on the cytoplasmic side; the sequence is TILRVRAFHRVPH. Residues 89-115 form a helical membrane-spanning segment; it reads NLVASTAVSDVLVAALVMPLSLVSELS. Residues 116-127 are Extracellular-facing; that stretch reads AGRRWQLGRSLC. A disulfide bridge links cysteine 127 with cysteine 205. A helical transmembrane segment spans residues 128–150; sequence HVWISFDVLCCTASIWNVAAIAL. Aspartate 134 is a serotonin binding site. Residues 151-168 lie on the Cytoplasmic side of the membrane; sequence DRYWTITRHLQYTLRTRR. A helical transmembrane segment spans residues 169-189; that stretch reads RASALMIAITWALSALIALAP. At 190 to 211 the chain is on the extracellular side; the sequence is LLFGWGEAYDARLQRCQVSQEP. A helical transmembrane segment spans residues 212-233; that stretch reads SYAVFSTCGAFYVPLAVVLFVY. The Cytoplasmic portion of the chain corresponds to 234–300; it reads WKIYKAAKFR…QKEKRAAMMV (67 aa). A helical transmembrane segment spans residues 301–325; sequence GILIGVFVLCWIPFFLTELVSPLCA. Residues 326–327 are Extracellular-facing; sequence CS. The helical transmembrane segment at 328–352 threads the bilayer; it reads LPPIWKSIFLWLGYSNSFFNPLIYT. The Cytoplasmic segment spans residues 353 to 370; the sequence is AFNKNYNNAFKSLFTKQR.

The protein belongs to the G-protein coupled receptor 1 family. Brain; in the CA1 region of hippocampus, the medial habenula, and raphe nuclei.

It is found in the cell membrane. Functionally, G-protein coupled receptor for 5-hydroxytryptamine (serotonin), a biogenic hormone that functions as a neurotransmitter, a hormone and a mitogen. Also functions as a receptor for ergot alkaloid derivatives and other psychoactive substances. Ligand binding causes a conformation change that triggers signaling via guanine nucleotide-binding proteins (G proteins) and modulates the activity of downstream effectors. Htr5b is coupled to G(i)/G(o) G alpha proteins and mediates inhibitory neurotransmission: signaling inhibits adenylate cyclase activity and activates a phosphatidylinositol-calcium second messenger system that regulates the release of Ca(2+) ions from intracellular stores. This is 5-hydroxytryptamine receptor 5B from Rattus norvegicus (Rat).